A 77-amino-acid chain; its full sequence is U8-lycotoxin-Ls1e (77 aa).

The N-terminal stretch at 1–20 is a signal peptide; the sequence is MKLIIFTGLVLFAIVSLIEA. A propeptide spanning residues 21 to 26 is cleaved from the precursor; the sequence is QAENEK.

It belongs to the neurotoxin 19 (CSTX) family. 08 (U8-Lctx) subfamily. Post-translationally, contains 4 disulfide bonds. Expressed by the venom gland.

The protein resides in the secreted. The sequence is that of U8-lycotoxin-Ls1e from Lycosa singoriensis (Wolf spider).